We begin with the raw amino-acid sequence, 339 residues long: Dihydroorotate dehydrogenase (quinone) (339 aa).

FMN is bound by residues 62-66 (AGMDK) and Thr86. Lys66 contacts substrate. Substrate is bound at residue 111-115 (NRMGF). FMN contacts are provided by Asn139 and Asn172. Asn172 provides a ligand contact to substrate. Ser175 (nucleophile) is an active-site residue. Residue Asn177 participates in substrate binding. Residues Lys217 and Thr245 each coordinate FMN. 246 to 247 (NT) contributes to the substrate binding site. Residues Gly268, Gly297, and 318 to 319 (FS) each bind FMN.

This sequence belongs to the dihydroorotate dehydrogenase family. Type 2 subfamily. In terms of assembly, monomer. It depends on FMN as a cofactor.

Its subcellular location is the cell membrane. It catalyses the reaction (S)-dihydroorotate + a quinone = orotate + a quinol. The protein operates within pyrimidine metabolism; UMP biosynthesis via de novo pathway; orotate from (S)-dihydroorotate (quinone route): step 1/1. Functionally, catalyzes the conversion of dihydroorotate to orotate with quinone as electron acceptor. The protein is Dihydroorotate dehydrogenase (quinone) of Shewanella halifaxensis (strain HAW-EB4).